The following is a 618-amino-acid chain: Elongation factor 4 (618 aa).

Residues 17–198 (AIIRNFCIIA…KIVRDLPAPE (182 aa)) enclose the tr-type G domain. Residues 29–34 (DHGKST) and 145–148 (NKID) contribute to the GTP site.

It belongs to the TRAFAC class translation factor GTPase superfamily. Classic translation factor GTPase family. LepA subfamily.

It is found in the cell membrane. It carries out the reaction GTP + H2O = GDP + phosphate + H(+). In terms of biological role, required for accurate and efficient protein synthesis under certain stress conditions. May act as a fidelity factor of the translation reaction, by catalyzing a one-codon backward translocation of tRNAs on improperly translocated ribosomes. Back-translocation proceeds from a post-translocation (POST) complex to a pre-translocation (PRE) complex, thus giving elongation factor G a second chance to translocate the tRNAs correctly. Binds to ribosomes in a GTP-dependent manner. This Pseudarthrobacter chlorophenolicus (strain ATCC 700700 / DSM 12829 / CIP 107037 / JCM 12360 / KCTC 9906 / NCIMB 13794 / A6) (Arthrobacter chlorophenolicus) protein is Elongation factor 4.